The primary structure comprises 104 residues: uncharacterized protein (104 aa).

This is an uncharacterized protein from Treponema pallidum (strain Nichols).